We begin with the raw amino-acid sequence, 246 residues long: Exosome complex component Rrp41 (246 aa).

The protein belongs to the RNase PH family. Rrp41 subfamily. As to quaternary structure, component of the archaeal exosome complex. Forms a hexameric ring-like arrangement composed of 3 Rrp41-Rrp42 heterodimers. The hexameric ring associates with a trimer of Rrp4 and/or Csl4 subunits.

It localises to the cytoplasm. Its function is as follows. Catalytic component of the exosome, which is a complex involved in RNA degradation. Has 3'-&gt;5' exoribonuclease activity. Can also synthesize heteromeric RNA-tails. The polypeptide is Exosome complex component Rrp41 (Pyrobaculum aerophilum (strain ATCC 51768 / DSM 7523 / JCM 9630 / CIP 104966 / NBRC 100827 / IM2)).